We begin with the raw amino-acid sequence, 228 residues long: Ribosomal RNA small subunit methyltransferase G (228 aa).

S-adenosyl-L-methionine-binding positions include glycine 92, phenylalanine 97, 115-117 (EAT), 143-144 (AE), and arginine 156.

Belongs to the methyltransferase superfamily. RNA methyltransferase RsmG family.

It localises to the cytoplasm. In terms of biological role, specifically methylates the N7 position of a guanine in 16S rRNA. The protein is Ribosomal RNA small subunit methyltransferase G of Thermosynechococcus vestitus (strain NIES-2133 / IAM M-273 / BP-1).